The primary structure comprises 296 residues: Putative S-adenosyl-L-methionine-dependent methyltransferase MAP_3881 (296 aa).

Residues D121 and 150–151 contribute to the S-adenosyl-L-methionine site; that span reads DL.

Belongs to the UPF0677 family.

Functionally, exhibits S-adenosyl-L-methionine-dependent methyltransferase activity. The chain is Putative S-adenosyl-L-methionine-dependent methyltransferase MAP_3881 from Mycolicibacterium paratuberculosis (strain ATCC BAA-968 / K-10) (Mycobacterium paratuberculosis).